Here is a 201-residue protein sequence, read N- to C-terminus: Large ribosomal subunit protein uL4 (201 aa).

Residues 44–68 are disordered; the sequence is KAQKTRSEVAGTTKKSKKQKGGGAR.

The protein belongs to the universal ribosomal protein uL4 family. Part of the 50S ribosomal subunit.

Functionally, one of the primary rRNA binding proteins, this protein initially binds near the 5'-end of the 23S rRNA. It is important during the early stages of 50S assembly. It makes multiple contacts with different domains of the 23S rRNA in the assembled 50S subunit and ribosome. Forms part of the polypeptide exit tunnel. The polypeptide is Large ribosomal subunit protein uL4 (Xanthomonas oryzae pv. oryzae (strain MAFF 311018)).